The sequence spans 275 residues: MSQQLQQIIDNTWENRAELSPKAASAEIREAVAHAIEQLDRGALRVAEKIDGAWTVHQWLKKAVLLSFRLEDNAPMPAGGYSQFYDKVPSKFANYTAEDFAAGGFRVVPPAIARRGSFIAKNVVLMPSYTNIGAYVDEGTMVDTWATVGSCAQIGKNVHLSGGVGIGGVLEPLQANPVIIEDNCFIGARSEVVEGVIVEENSVISMGVYLGQSTKIYDRETGEVTYGRIPAGSVVVAGNLPAKDGTHSLYCAVIVKKVDAKTRAKVGLNELLRGD.

Residues R106 and D143 each coordinate substrate.

This sequence belongs to the transferase hexapeptide repeat family. Homotrimer.

Its subcellular location is the cytoplasm. It catalyses the reaction (S)-2,3,4,5-tetrahydrodipicolinate + succinyl-CoA + H2O = (S)-2-succinylamino-6-oxoheptanedioate + CoA. The protein operates within amino-acid biosynthesis; L-lysine biosynthesis via DAP pathway; LL-2,6-diaminopimelate from (S)-tetrahydrodipicolinate (succinylase route): step 1/3. The chain is 2,3,4,5-tetrahydropyridine-2,6-dicarboxylate N-succinyltransferase from Burkholderia pseudomallei (strain 1106a).